The primary structure comprises 714 residues: Fatty acid oxidation complex subunit alpha (714 aa).

The enoyl-CoA hydratase stretch occupies residues 1–190 (MEMASAFTLN…KLGLVDDVVP (190 aa)). Positions 306 to 714 (APLNSVGILG…FWKTTATDLQ (409 aa)) are 3-hydroxyacyl-CoA dehydrogenase.

This sequence in the N-terminal section; belongs to the enoyl-CoA hydratase/isomerase family. It in the central section; belongs to the 3-hydroxyacyl-CoA dehydrogenase family. In terms of assembly, heterotetramer of two alpha chains (FadJ) and two beta chains (FadI).

It localises to the cytoplasm. It carries out the reaction a (3S)-3-hydroxyacyl-CoA = a (2E)-enoyl-CoA + H2O. The catalysed reaction is a 4-saturated-(3S)-3-hydroxyacyl-CoA = a (3E)-enoyl-CoA + H2O. It catalyses the reaction a (3S)-3-hydroxyacyl-CoA + NAD(+) = a 3-oxoacyl-CoA + NADH + H(+). The enzyme catalyses (3S)-3-hydroxybutanoyl-CoA = (3R)-3-hydroxybutanoyl-CoA. The protein operates within lipid metabolism; fatty acid beta-oxidation. Its function is as follows. Catalyzes the formation of a hydroxyacyl-CoA by addition of water on enoyl-CoA. Also exhibits 3-hydroxyacyl-CoA epimerase and 3-hydroxyacyl-CoA dehydrogenase activities. The chain is Fatty acid oxidation complex subunit alpha from Escherichia coli O6:K15:H31 (strain 536 / UPEC).